The primary structure comprises 229 residues: UPF0758 protein GSU0386 (229 aa).

An MPN domain is found at 107-229 (RFTSPEQVYN…FTSFVSAGLL (123 aa)). Zn(2+) is bound by residues His178, His180, and Asp191. Positions 178 to 191 (HNHPTGDPAPSRED) match the JAMM motif motif.

The protein belongs to the UPF0758 family.

This is UPF0758 protein GSU0386 from Geobacter sulfurreducens (strain ATCC 51573 / DSM 12127 / PCA).